The following is a 172-amino-acid chain: Large ribosomal subunit protein uL10 (172 aa).

The protein belongs to the universal ribosomal protein uL10 family. In terms of assembly, part of the ribosomal stalk of the 50S ribosomal subunit. The N-terminus interacts with L11 and the large rRNA to form the base of the stalk. The C-terminus forms an elongated spine to which L12 dimers bind in a sequential fashion forming a multimeric L10(L12)X complex.

In terms of biological role, forms part of the ribosomal stalk, playing a central role in the interaction of the ribosome with GTP-bound translation factors. The chain is Large ribosomal subunit protein uL10 from Afipia carboxidovorans (strain ATCC 49405 / DSM 1227 / KCTC 32145 / OM5) (Oligotropha carboxidovorans).